The sequence spans 569 residues: Pyrophosphate--fructose 6-phosphate 1-phosphotransferase subunit beta (569 aa).

Diphosphate is bound at residue Gly-107. Residue Asp-201 coordinates Mg(2+). Residues 229-231, 268-269, 276-278, Glu-337, and 442-445 contribute to the substrate site; these read TID, KY, MGR, and YEGR. Catalysis depends on Asp-231, which acts as the Proton acceptor.

This sequence belongs to the phosphofructokinase type A (PFKA) family. PPi-dependent PFK group II subfamily. Clade 'Long' sub-subfamily. As to quaternary structure, tetramer of two alpha (regulatory) and two beta (catalytic) chains. It depends on Mg(2+) as a cofactor.

Its subcellular location is the cytoplasm. It catalyses the reaction beta-D-fructose 6-phosphate + diphosphate = beta-D-fructose 1,6-bisphosphate + phosphate + H(+). It functions in the pathway carbohydrate degradation; glycolysis; D-glyceraldehyde 3-phosphate and glycerone phosphate from D-glucose: step 3/4. With respect to regulation, allosterically activated by fructose 2,6-bisphosphate. Its function is as follows. Catalytic subunit of pyrophosphate--fructose 6-phosphate 1-phosphotransferase. Catalyzes the phosphorylation of D-fructose 6-phosphate, the first committing step of glycolysis. Uses inorganic phosphate (PPi) as phosphoryl donor instead of ATP like common ATP-dependent phosphofructokinases (ATP-PFKs), which renders the reaction reversible, and can thus function both in glycolysis and gluconeogenesis. The protein is Pyrophosphate--fructose 6-phosphate 1-phosphotransferase subunit beta of Solanum tuberosum (Potato).